The chain runs to 256 residues: 3-hydroxy-5-phosphonooxypentane-2,4-dione thiolase (256 aa).

The Schiff-base intermediate with substrate role is filled by lysine 168.

It belongs to the DeoC/FbaB aldolase family. As to quaternary structure, homodecamer.

The protein localises to the cytoplasm. The enzyme catalyses dihydroxyacetone phosphate + acetyl-CoA = 3-hydroxy-2,4-dioxopentyl phosphate + CoA. Its function is as follows. Involved in the degradation of phospho-AI-2, thereby terminating induction of the lsr operon and closing the AI-2 signaling cycle. Catalyzes the transfer of an acetyl moiety from 3-hydroxy-5-phosphonooxypentane-2,4-dione to CoA to form glycerone phosphate and acetyl-CoA. The sequence is that of 3-hydroxy-5-phosphonooxypentane-2,4-dione thiolase (lsrF) from Shigella flexneri serotype 5b (strain 8401).